Consider the following 330-residue polypeptide: Ketol-acid reductoisomerase (NADP(+)) (330 aa).

One can recognise a KARI N-terminal Rossmann domain in the interval 1 to 181; sequence MKVFYDSDFK…GLSRAGVIQT (181 aa). NADP(+) contacts are provided by residues 24–27, Arg-47, Ser-52, and 82–85; these read YGSQ and DELQ. The active site involves His-107. Residue Gly-133 participates in NADP(+) binding. In terms of domain architecture, KARI C-terminal knotted spans 182–327; the sequence is TFKEETETDL…AKLRKMCGLE (146 aa). Residues Asp-190, Glu-194, Glu-226, and Glu-230 each contribute to the Mg(2+) site. Ser-251 contributes to the substrate binding site.

The protein belongs to the ketol-acid reductoisomerase family. Mg(2+) serves as cofactor.

It catalyses the reaction (2R)-2,3-dihydroxy-3-methylbutanoate + NADP(+) = (2S)-2-acetolactate + NADPH + H(+). The enzyme catalyses (2R,3R)-2,3-dihydroxy-3-methylpentanoate + NADP(+) = (S)-2-ethyl-2-hydroxy-3-oxobutanoate + NADPH + H(+). The protein operates within amino-acid biosynthesis; L-isoleucine biosynthesis; L-isoleucine from 2-oxobutanoate: step 2/4. It participates in amino-acid biosynthesis; L-valine biosynthesis; L-valine from pyruvate: step 2/4. In terms of biological role, involved in the biosynthesis of branched-chain amino acids (BCAA). Catalyzes an alkyl-migration followed by a ketol-acid reduction of (S)-2-acetolactate (S2AL) to yield (R)-2,3-dihydroxy-isovalerate. In the isomerase reaction, S2AL is rearranged via a Mg-dependent methyl migration to produce 3-hydroxy-3-methyl-2-ketobutyrate (HMKB). In the reductase reaction, this 2-ketoacid undergoes a metal-dependent reduction by NADPH to yield (R)-2,3-dihydroxy-isovalerate. In Methanococcus maripaludis (strain DSM 14266 / JCM 13030 / NBRC 101832 / S2 / LL), this protein is Ketol-acid reductoisomerase (NADP(+)).